Consider the following 601-residue polypeptide: Aspartate--tRNA(Asp/Asn) ligase (601 aa).

E177 is a binding site for L-aspartate. The tract at residues 201 to 204 (QLFK) is aspartate. R223 contributes to the L-aspartate binding site. Residues 223–225 (RDE) and Q232 contribute to the ATP site. H455 lines the L-aspartate pocket. E489 is a binding site for ATP. R496 is a binding site for L-aspartate. 541–544 (GWDR) serves as a coordination point for ATP. A disordered region spans residues 568-601 (VDPLTDAPAPIPLEQRRETGVDFKPKKKTDESAV). Residues 581-601 (EQRRETGVDFKPKKKTDESAV) are compositionally biased toward basic and acidic residues.

It belongs to the class-II aminoacyl-tRNA synthetase family. Type 1 subfamily. Homodimer.

It is found in the cytoplasm. It catalyses the reaction tRNA(Asx) + L-aspartate + ATP = L-aspartyl-tRNA(Asx) + AMP + diphosphate. Its function is as follows. Aspartyl-tRNA synthetase with relaxed tRNA specificity since it is able to aspartylate not only its cognate tRNA(Asp) but also tRNA(Asn). Reaction proceeds in two steps: L-aspartate is first activated by ATP to form Asp-AMP and then transferred to the acceptor end of tRNA(Asp/Asn). This Corynebacterium diphtheriae (strain ATCC 700971 / NCTC 13129 / Biotype gravis) protein is Aspartate--tRNA(Asp/Asn) ligase.